A 342-amino-acid polypeptide reads, in one-letter code: Nucleoid-associated protein Shewmr4_2217 (342 aa).

The protein belongs to the YejK family.

It localises to the cytoplasm. It is found in the nucleoid. The protein is Nucleoid-associated protein Shewmr4_2217 of Shewanella sp. (strain MR-4).